The following is a 740-amino-acid chain: UvrABC system protein B (740 aa).

Positions 1 to 36 (MTIAIRTTLDEPENHSDFVPHRPSRPEKTEPSKPFR) are disordered. Basic and acidic residues predominate over residues 8 to 33 (TLDEPENHSDFVPHRPSRPEKTEPSK). One can recognise a Helicase ATP-binding domain in the interval 56 to 444 (KDIQKGERDQ…GGVFVEQIIR (389 aa)). ATP is bound at residue 69–76 (GVTGSGKT). A Beta-hairpin motif is present at residues 122 to 145 (YYDYYQPEAYVPRTDTYIEKDSAI). Residues 461–627 (QVDNLIFEAK…TVKRQVDDIV (167 aa)) enclose the Helicase C-terminal domain. Residues 651 to 686 (ARSISETEKEMLEAAANLEFEKAAQLRDVLHQLKRQ) form the UVR domain. The tract at residues 687 to 740 (ELGLPPEKSSEIQGRSEAGRPGTRKTRSDKAREAKASKRVKQEAGEKLLRSRGH) is disordered. Positions 712 to 740 (TRSDKAREAKASKRVKQEAGEKLLRSRGH) are enriched in basic and acidic residues.

It belongs to the UvrB family. In terms of assembly, forms a heterotetramer with UvrA during the search for lesions. Interacts with UvrC in an incision complex.

It is found in the cytoplasm. In terms of biological role, the UvrABC repair system catalyzes the recognition and processing of DNA lesions. A damage recognition complex composed of 2 UvrA and 2 UvrB subunits scans DNA for abnormalities. Upon binding of the UvrA(2)B(2) complex to a putative damaged site, the DNA wraps around one UvrB monomer. DNA wrap is dependent on ATP binding by UvrB and probably causes local melting of the DNA helix, facilitating insertion of UvrB beta-hairpin between the DNA strands. Then UvrB probes one DNA strand for the presence of a lesion. If a lesion is found the UvrA subunits dissociate and the UvrB-DNA preincision complex is formed. This complex is subsequently bound by UvrC and the second UvrB is released. If no lesion is found, the DNA wraps around the other UvrB subunit that will check the other stand for damage. This chain is UvrABC system protein B, found in Zymomonas mobilis subsp. mobilis (strain ATCC 31821 / ZM4 / CP4).